The chain runs to 78 residues: Large ribosomal subunit protein bL28 (78 aa).

The interval 1 to 21 is disordered; it reads MSRVCQLSGKRANNGMAVSHS.

The protein belongs to the bacterial ribosomal protein bL28 family.

The protein is Large ribosomal subunit protein bL28 of Synechococcus sp. (strain RCC307).